A 244-amino-acid polypeptide reads, in one-letter code: UL16-binding protein 1 (244 aa).

Positions 1–25 are cleaved as a signal peptide; the sequence is MAAAASPAFLLCLPLLHLLSGWSRA. Positions 26-117 are MHC class I alpha-1 like; it reads GWVDTHCLCY…IQVENLIPIE (92 aa). The cysteines at positions 50 and 66 are disulfide-linked. The N-linked (GlcNAc...) asparagine glycan is linked to asparagine 82. An MHC class I alpha-2 like region spans residues 118-208; that stretch reads PLTLQARMSC…MYWEQMLDPT (91 aa). Cysteine 127 and cysteine 190 are joined by a disulfide. A lipid anchor (GPI-anchor amidated glycine) is attached at glycine 216. Residues 217-244 constitute a propeptide, removed in mature form; sequence TTQPKAMATTLSPWSLLIIFLCFILAGR.

The protein belongs to the MHC class I family. Interacts with KLRK1/NKG2D. Does not bind to beta2-microglobulin. As to quaternary structure, (Microbial infection) In CMV-infected cells, interacts with the viral glycoprotein UL16; this interaction causes ULBP1 retention in the endoplasmic reticulum and cis-Golgi and prevents binding to and activation of KLRK1/NKG2D, providing CMV with an immune evasion mechanism. In terms of tissue distribution, expressed in T-cells, B-cells, erythroleukemia cell lines and in a wide range of tissues including heart, brain, lung, liver, testis, lymph node, thymus, tonsil and bone marrow. Also found in fetal heart, brain, lung and liver.

Its subcellular location is the cell membrane. The protein resides in the endoplasmic reticulum. Functionally, binds and activates the KLRK1/NKG2D receptor, mediating natural killer cell cytotoxicity. The polypeptide is UL16-binding protein 1 (ULBP1) (Homo sapiens (Human)).